The chain runs to 285 residues: Acetyl-coenzyme A carboxylase carboxyl transferase subunit beta (285 aa).

The CoA carboxyltransferase N-terminal domain maps to 29 to 285; sequence IMTKCPKCKK…ILKIHQEVTK (257 aa). The Zn(2+) site is built by Cys33, Cys36, Cys52, and Cys55. The segment at 33–55 adopts a C4-type zinc-finger fold; sequence CPKCKKIMYTKELAENLNVCFNC.

The protein belongs to the AccD/PCCB family. As to quaternary structure, acetyl-CoA carboxylase is a heterohexamer composed of biotin carboxyl carrier protein (AccB), biotin carboxylase (AccC) and two subunits each of ACCase subunit alpha (AccA) and ACCase subunit beta (AccD). It depends on Zn(2+) as a cofactor.

The protein resides in the cytoplasm. The enzyme catalyses N(6)-carboxybiotinyl-L-lysyl-[protein] + acetyl-CoA = N(6)-biotinyl-L-lysyl-[protein] + malonyl-CoA. It functions in the pathway lipid metabolism; malonyl-CoA biosynthesis; malonyl-CoA from acetyl-CoA: step 1/1. Component of the acetyl coenzyme A carboxylase (ACC) complex. Biotin carboxylase (BC) catalyzes the carboxylation of biotin on its carrier protein (BCCP) and then the CO(2) group is transferred by the transcarboxylase to acetyl-CoA to form malonyl-CoA. In Staphylococcus aureus (strain MSSA476), this protein is Acetyl-coenzyme A carboxylase carboxyl transferase subunit beta.